A 108-amino-acid polypeptide reads, in one-letter code: Thiosulfate sulfurtransferase GlpE (108 aa).

Residues 17 to 105 (QEKEAVLVDI…WQRQFPAEVA (89 aa)) enclose the Rhodanese domain. The active-site Cysteine persulfide intermediate is the cysteine 65.

This sequence belongs to the GlpE family.

Its subcellular location is the cytoplasm. It catalyses the reaction thiosulfate + hydrogen cyanide = thiocyanate + sulfite + 2 H(+). It carries out the reaction thiosulfate + [thioredoxin]-dithiol = [thioredoxin]-disulfide + hydrogen sulfide + sulfite + 2 H(+). In terms of biological role, transferase that catalyzes the transfer of sulfur from thiosulfate to thiophilic acceptors such as cyanide or dithiols. May function in a CysM-independent thiosulfate assimilation pathway by catalyzing the conversion of thiosulfate to sulfite, which can then be used for L-cysteine biosynthesis. This is Thiosulfate sulfurtransferase GlpE from Escherichia coli O8 (strain IAI1).